We begin with the raw amino-acid sequence, 248 residues long: 14-3-3 protein zeta (248 aa).

It belongs to the 14-3-3 family. Homodimer.

The protein localises to the cytoplasm. Its function is as follows. Adapter protein implicated in the regulation of a large spectrum of both general and specialized signaling pathways. Binds to a large number of partners, usually by recognition of a phosphoserine or phosphothreonine motif. Binding generally results in the modulation of the activity of the binding partner. The protein is 14-3-3 protein zeta (14-3-3zeta) of Aedes aegypti (Yellowfever mosquito).